Consider the following 499-residue polypeptide: MIKRALISVFDKTGILDLAKFLESRDVEIISTGGTYKHLKENGVKVIDIEEVTGFPEMLDGRVKTLNPLIHGGILAIRDNEEHMKVIEEKGINPIDMVVVNLYPFFNKVEENLSFDEKVEFIDIGGPTMIRAAAKNFKDVVVLTDTKDYENVINEIKENNQVNTQTRKKLAGKVFNLMSAYDAAISNFLLEEEYPEYLTLSYKKNMDLRYGENPHQTAAYYTSTVGKYPMKNFEKLNGKELSYNNIKDMDIAWKTVCEFEEVACCALKHNTPCGVAIGDTVQEAYTKAYECDPISIFGGIVAFNRKVDKETAENLAKIFLEIVVAPDFDEDALEVLKNKKNLRVIKCEEKSTEGKDMAKVDGGILVQKSDNKLLENTKVVTEKSPTEQEMKDLIFGMKVVKYVKSNAIVVVKDGMAKGIGGGQVNRIWAAKEALDRAGDGVVLASDAFFPFGDVAEEAAKWGIKAIIQPGGSIRDEESIKVCNEKGISMVFTGIRHFKH.

The 144-residue stretch at 1–144 folds into the MGS-like domain; it reads MIKRALISVF…KNFKDVVVLT (144 aa).

Belongs to the PurH family.

It catalyses the reaction (6R)-10-formyltetrahydrofolate + 5-amino-1-(5-phospho-beta-D-ribosyl)imidazole-4-carboxamide = 5-formamido-1-(5-phospho-D-ribosyl)imidazole-4-carboxamide + (6S)-5,6,7,8-tetrahydrofolate. It carries out the reaction IMP + H2O = 5-formamido-1-(5-phospho-D-ribosyl)imidazole-4-carboxamide. It participates in purine metabolism; IMP biosynthesis via de novo pathway; 5-formamido-1-(5-phospho-D-ribosyl)imidazole-4-carboxamide from 5-amino-1-(5-phospho-D-ribosyl)imidazole-4-carboxamide (10-formyl THF route): step 1/1. The protein operates within purine metabolism; IMP biosynthesis via de novo pathway; IMP from 5-formamido-1-(5-phospho-D-ribosyl)imidazole-4-carboxamide: step 1/1. The polypeptide is Bifunctional purine biosynthesis protein PurH (Clostridium botulinum (strain Kyoto / Type A2)).